The chain runs to 453 residues: Choline kinase alpha (453 aa).

The interval 22 to 81 (CGGSAAPTPGVGQQRDAAGELESKQLGGRSQPLALPPPPPPPLPLPPPPSPPLADEQPEP) is disordered. A compositionally biased stretch (pro residues) spans 55 to 73 (ALPPPPPPPLPLPPPPSPP). Ser71 is modified (phosphoserine). ATP contacts are provided by residues 113-119 (RGGLSNM), Arg142, and 203-209 (QFIPSRR). A phosphocholine-binding site is contributed by 115–117 (GLS). N6-acetyllysine is present on Lys243. Ser275 carries the post-translational modification Phosphoserine. Residues Gln304 and Asp326 each coordinate ATP.

The protein belongs to the choline/ethanolamine kinase family. Heterodimer with CHKB. Homodimer. As to quaternary structure, monomer; acetylation by KAT5 promotes dissociation of the homodimer and monomerization. Phosphorylated at Ser-275 by AMPK in response to glucose deprivation, leading to localization to lipid droplets. Post-translationally, acetylated by KAT5 at Lys-243 following phosphorylation by AMPK, leading to monomerization and conversion into a tyrosine-protein kinase. Testis, brain, lung, kidney and liver.

The protein localises to the cytoplasm. It is found in the cytosol. Its subcellular location is the lipid droplet. It catalyses the reaction choline + ATP = phosphocholine + ADP + H(+). It carries out the reaction ethanolamine + ATP = phosphoethanolamine + ADP + H(+). The catalysed reaction is L-tyrosyl-[protein] + ATP = O-phospho-L-tyrosyl-[protein] + ADP + H(+). The protein operates within phospholipid metabolism; phosphatidylcholine biosynthesis; phosphocholine from choline: step 1/1. It participates in phospholipid metabolism; phosphatidylethanolamine biosynthesis; phosphatidylethanolamine from ethanolamine: step 1/3. Functionally, plays a key role in phospholipid biosynthesis by catalyzing the phosphorylation of free choline to phosphocholine, the first step in phosphatidylcholine biosynthesis. Also phosphorylates ethanolamine, thereby contributing to phosphatidylethanolamine biosynthesis. Has higher activity with choline. Its function is as follows. This isoform plays a key role in lipolysis of lipid droplets following glucose deprivation. In response to glucose deprivation, phosphorylated by AMPK, promoting localization to lipid droplets. Phosphorylation is followed by acetylation by KAT5, leading to dissociation of the homodimer into a monomer. Monomeric CHKA isoform 1 is converted into a tyrosine-protein kinase, which phosphorylates lipid droplet structural proteins PLIN2 and PLIN3, leading to lipolysis of lipid droplets. The chain is Choline kinase alpha (Chka) from Rattus norvegicus (Rat).